The following is a 417-amino-acid chain: DNA-directed RNA polymerase subunit beta (417 aa).

This sequence belongs to the RNA polymerase beta chain family. As to quaternary structure, in plastids the minimal PEP RNA polymerase catalytic core is composed of four subunits: alpha, beta, beta', and beta''. When a (nuclear-encoded) sigma factor is associated with the core the holoenzyme is formed, which can initiate transcription.

The protein localises to the plastid. The protein resides in the chloroplast. The catalysed reaction is RNA(n) + a ribonucleoside 5'-triphosphate = RNA(n+1) + diphosphate. Functionally, DNA-dependent RNA polymerase catalyzes the transcription of DNA into RNA using the four ribonucleoside triphosphates as substrates. This is DNA-directed RNA polymerase subunit beta (rpoB) from Saponaria officinalis (Common soapwort).